The primary structure comprises 239 residues: MKVSLFVTCLIDLFYTNVGKATVELLERLGCEIDFPEAQTCCGQPAYNSGYIKDAKEAMKQMMRAFADADYVVTPSGSCAAMLKEYPHIFRGDPEWEEEAKRLAAKTYELTQFLVNVLRVEDVGASLPGRATYHTSCHMTRLLGEKEVPLRLLEHVKGLELVPLPNAHQCCGFGGTFSVKMGPISEQMVDEKIEHIEEVKADYLIGADCGCLMNIGGRIGRVGKPIRVMHIAEVLNHRN.

Belongs to the LutA/YkgE family.

In terms of biological role, is involved in L-lactate degradation and allows cells to grow with lactate as the sole carbon source. The protein is Lactate utilization protein A of Geobacillus thermodenitrificans (strain NG80-2).